A 538-amino-acid chain; its full sequence is MKVFLVTCLGFAVFSSSVCVNINILQQIGYIKQQVRQLSYYSQSSSSYIVVKLLPNIQPTDNSCEFKSVTQYNKTLSNLLLPIAENINNIASPSSGSRRHKRFAGIAIGIAALGVATAAQVTAAVSLVQAQTNARAIAAMKNSIQATNRAVFEVKEGTQRLAIAVQAIQDHINTIMNTQLNNMSCQILDNQLATSLGLYLTELTTVFQPQLINPALSPISIQALRSLLGSMTPAVVQATLSTSISAAEILSAGLMEGQIVSVLLDEMQMIVKINIPTIVTQSNALVIDFYSISSFINNQESIIQLPDRILEIGNEQWSYPAKNCKLTRHHIFCQYNEAERLSLESKLCLAGNISACVFSPIAGSYMRRFVALDGTIVANCRSLTCLCKSPSYPIYQPDHHAVTTIDLTACQTLSLDGLDFSIVSLSNITYAENLTISLSQTINTQPIDISTELSKVNASLQNAVKYIKESNHQLQSVNVNSKIGAIIVAALVLSILSIIISLLFCCWAYVATKEIRRINFKTNHINTISSSVDDLIRY.

Positions 1–19 (MKVFLVTCLGFAVFSSSVC) are cleaved as a signal peptide. Over 20–486 (VNINILQQIG…VNVNSKIGAI (467 aa)) the chain is Extracellular. N56 and N73 each carry an N-linked (GlcNAc...) asparagine; by host glycan. The interval 103–127 (FAGIAIGIAALGVATAAQVTAAVSL) is fusion peptide. A coiled-coil region spans residues 128–156 (VQAQTNARAIAAMKNSIQATNRAVFEVKE). A glycan (N-linked (GlcNAc...) asparagine; by host) is linked at N182. 4 cysteine pairs are disulfide-bonded: C324/C333, C348/C356, C380/C385, and C387/C410. N-linked (GlcNAc...) asparagine; by host glycosylation occurs at N352. 3 N-linked (GlcNAc...) asparagine; by host glycosylation sites follow: N427, N433, and N457. Residues 452-477 (ELSKVNASLQNAVKYIKESNHQLQSV) adopt a coiled-coil conformation. The helical transmembrane segment at 487–507 (IVAALVLSILSIIISLLFCCW) threads the bilayer. Residues 508–538 (AYVATKEIRRINFKTNHINTISSSVDDLIRY) lie on the Cytoplasmic side of the membrane.

The protein belongs to the paramyxoviruses fusion glycoprotein family. In terms of assembly, homotrimer; disulfide-linked F1-F2. Interacts with host LAMP1; LAMP2 and LAMP3; these interactions promote the cleavage of the viral fusion protein F. Post-translationally, the inactive precursor F0 is glycosylated and proteolytically cleaved into F1 and F2 to be functionally active. The cleavage is mediated by cellular proteases including host FURIN during the transport and maturation of the polypeptide.

It localises to the virion membrane. The protein resides in the host cell membrane. Class I viral fusion protein. Under the current model, the protein has at least 3 conformational states: pre-fusion native state, pre-hairpin intermediate state, and post-fusion hairpin state. During viral and plasma cell membrane fusion, the heptad repeat (HR) regions assume a trimer-of-hairpins structure, positioning the fusion peptide in close proximity to the C-terminal region of the ectodomain. The formation of this structure appears to drive apposition and subsequent fusion of viral and plasma cell membranes. Directs fusion of viral and cellular membranes leading to delivery of the nucleocapsid into the cytoplasm. This fusion is pH independent and occurs directly at the outer cell membrane. The trimer of F1-F2 (F protein) probably interacts with HN at the virion surface. Upon HN binding to its cellular receptor, the hydrophobic fusion peptide is unmasked and interacts with the cellular membrane, inducing the fusion between cell and virion membranes. Later in infection, F proteins expressed at the plasma membrane of infected cells could mediate fusion with adjacent cells to form syncytia, a cytopathic effect that could lead to tissue necrosis. The chain is Fusion glycoprotein F0 (F) from Mumps virus genotype B (strain Miyahara vaccine) (MuV).